A 424-amino-acid polypeptide reads, in one-letter code: Putative chloroquine resistance transporter (424 aa).

Residues 1-57 (MKILKKKKKGNQQIVPDERYRELDSHAPNENEIADEAPMSRKILYYLKLVYHEIREN) lie on the Cytoplasmic side of the membrane. The helical transmembrane segment at 58 to 78 (ITIYLLIILYLCVCVMNKIMA) threads the bilayer. At 79–89 (KRTLKKIGNYS) the chain is on the vacuolar side. A glycan (N-linked (GlcNAc...) asparagine) is linked at N87. Residues 90–110 (FVTSETHNTICMVVFFSLYFI) form a helical membrane-spanning segment. Residues 111-124 (FGRRVTSAKERHQN) lie on the Cytoplasmic side of the membrane. The chain crosses the membrane as a helical span at residues 125–145 (FGLQFLLISLLDACSVIIAFI). Topologically, residues 146-153 (GLTRTTGN) are vacuolar. A helical membrane pass occupies residues 154–174 (IQSFVMQLSIPINMFFCFLIL). At 175–179 (RYRYH) the chain is on the cytoplasmic side. Residues 180 to 200 (LFNYVGASIIVLTIAIVEFIL) traverse the membrane as a helical segment. The Vacuolar segment spans residues 201–208 (SFETQEEN). A helical transmembrane segment spans residues 209-229 (SIVFNLVLIASLIPMSFSNMT). Over 230–246 (REIVFKKYKINILRLNA) the chain is Cytoplasmic. Residues 247 to 267 (VVSFFQIFTSCLMLPMYTLPF) traverse the membrane as a helical segment. At 268–316 (LKQINLPFSEIGTNIKNGFRCLILGQNTIVENCGLGMAKMCDDCEGAWK) the chain is on the vacuolar side. 2 cysteine pairs are disulfide-bonded: C288-C311 and C300-C308. Residues 317–337 (TFLAYSFFNICDNLITSFIID) form a helical membrane-spanning segment. Residues 338–345 (KFSTMTYT) are Cytoplasmic-facing. Residues 346–366 (IVSCIQGPAIAIAYYFKFLAG) traverse the membrane as a helical segment. Residues 367-376 (DAVMKPRVLD) lie on the Vacuolar side of the membrane. The helical transmembrane segment at 377 to 397 (FVTLFGYLFGSIIYRVGNIIL) threads the bilayer. Topologically, residues 398-424 (EKKKMMEAGNDDDSEGELTNAESIITQ) are cytoplasmic.

It belongs to the CRT-like transporter family.

It is found in the vacuole membrane. Its function is as follows. Nutrient transporter. Involved in maintaining the osmotic homeostasis of the digestive vacuole. The sequence is that of Putative chloroquine resistance transporter from Plasmodium knowlesi.